The following is a 247-amino-acid chain: ATP synthase subunit a, chloroplastic (247 aa).

Helical transmembrane passes span 38–58 (QVLITSWFVIAILLGSAIIAV), 95–115 (VPFIGTMFLFIFVSNWSGALL), 134–154 (INTTVALALPTSVAYFYAGLT), 199–219 (LVVVVLVSLVPSVVPIPVMFL), and 220–240 (GLFTSGIQALIFATLAAAYIG).

This sequence belongs to the ATPase A chain family. As to quaternary structure, F-type ATPases have 2 components, CF(1) - the catalytic core - and CF(0) - the membrane proton channel. CF(1) has five subunits: alpha(3), beta(3), gamma(1), delta(1), epsilon(1). CF(0) has four main subunits: a, b, b' and c.

The protein localises to the plastid. The protein resides in the chloroplast thylakoid membrane. In terms of biological role, key component of the proton channel; it plays a direct role in the translocation of protons across the membrane. The protein is ATP synthase subunit a, chloroplastic of Ranunculus macranthus (Large buttercup).